The primary structure comprises 73 residues: Putative neurotoxin NaH-Cpp1a (73 aa).

The first 23 residues, 1 to 23 (MKSFYGILCVAVLMMFHLEMSES), serve as a signal peptide directing secretion. Intrachain disulfides connect Cys43/Cys58, Cys50/Cys63, and Cys57/Cys70.

Expressed outside of acontia.

The protein localises to the secreted. It localises to the nematocyst. Its function is as follows. Putative neurotoxin. This Calliactis polypus (Hermit crab anemone) protein is Putative neurotoxin NaH-Cpp1a.